A 137-amino-acid chain; its full sequence is Glutamate mutase sigma subunit (137 aa).

The region spanning 3 to 137 is the B12-binding domain; the sequence is KKTIVLGVIG…ADMKEVLGVE (135 aa). Adenosylcob(III)alamin-binding positions include 13–17, histidine 16, 61–63, and 93–97; these read SDCHA, SSL, and NIVVG.

The protein belongs to the methylaspartate mutase GlmS subunit family. As to quaternary structure, heterotetramer composed of 2 epsilon subunits (GlmE) and 2 sigma subunits (GlmS). GlmE exists as a homodimer and GlmS as a monomer. Adenosylcob(III)alamin serves as cofactor.

The enzyme catalyses (2S,3S)-3-methyl-L-aspartate = L-glutamate. It functions in the pathway amino-acid degradation; L-glutamate degradation via mesaconate pathway; acetate and pyruvate from L-glutamate: step 1/4. Catalyzes the carbon skeleton rearrangement of L-glutamate to L-threo-3-methylaspartate ((2S,3S)-3-methylaspartate). In Clostridium tetanomorphum, this protein is Glutamate mutase sigma subunit.